A 173-amino-acid chain; its full sequence is Flavodoxin (173 aa).

Positions 2 to 168 (IGIFFSTSTG…RVAGWVEAVV (167 aa)) constitute a Flavodoxin-like domain.

This sequence belongs to the flavodoxin family. The cofactor is FMN.

Functionally, low-potential electron donor to a number of redox enzymes. The chain is Flavodoxin from Chondrus crispus (Carrageen Irish moss).